We begin with the raw amino-acid sequence, 238 residues long: Ubiquinone biosynthesis O-methyltransferase (238 aa).

S-adenosyl-L-methionine-binding residues include Arg40, Gly59, Asp80, and Met124.

This sequence belongs to the methyltransferase superfamily. UbiG/COQ3 family.

The catalysed reaction is a 3-demethylubiquinol + S-adenosyl-L-methionine = a ubiquinol + S-adenosyl-L-homocysteine + H(+). The enzyme catalyses a 3-(all-trans-polyprenyl)benzene-1,2-diol + S-adenosyl-L-methionine = a 2-methoxy-6-(all-trans-polyprenyl)phenol + S-adenosyl-L-homocysteine + H(+). The protein operates within cofactor biosynthesis; ubiquinone biosynthesis. Its function is as follows. O-methyltransferase that catalyzes the 2 O-methylation steps in the ubiquinone biosynthetic pathway. This chain is Ubiquinone biosynthesis O-methyltransferase, found in Ralstonia nicotianae (strain ATCC BAA-1114 / GMI1000) (Ralstonia solanacearum).